We begin with the raw amino-acid sequence, 252 residues long: 3-dehydroquinate dehydratase (252 aa).

Residues 46-48 and Arg82 each bind 3-dehydroquinate; that span reads EWR. His143 functions as the Proton donor/acceptor in the catalytic mechanism. The active-site Schiff-base intermediate with substrate is Lys170. 3-dehydroquinate-binding residues include Arg212, Ser231, and Gln235.

The protein belongs to the type-I 3-dehydroquinase family. In terms of assembly, homodimer.

The catalysed reaction is 3-dehydroquinate = 3-dehydroshikimate + H2O. It participates in metabolic intermediate biosynthesis; chorismate biosynthesis; chorismate from D-erythrose 4-phosphate and phosphoenolpyruvate: step 3/7. Functionally, involved in the third step of the chorismate pathway, which leads to the biosynthesis of aromatic amino acids. Catalyzes the cis-dehydration of 3-dehydroquinate (DHQ) and introduces the first double bond of the aromatic ring to yield 3-dehydroshikimate. This is 3-dehydroquinate dehydratase from Listeria monocytogenes serotype 4a (strain HCC23).